The primary structure comprises 426 residues: Serine hydroxymethyltransferase (426 aa).

Residues leucine 115 and 119-121 (GHI) contribute to the (6S)-5,6,7,8-tetrahydrofolate site. An N6-(pyridoxal phosphate)lysine modification is found at lysine 225.

This sequence belongs to the SHMT family. As to quaternary structure, homodimer. It depends on pyridoxal 5'-phosphate as a cofactor.

It localises to the cytoplasm. It participates in amino-acid biosynthesis; glycine biosynthesis; glycine from L-serine: step 1/1. Its function is as follows. Catalyzes the reversible interconversion of serine and glycine with a modified folate serving as the one-carbon carrier. Also exhibits a pteridine-independent aldolase activity toward beta-hydroxyamino acids, producing glycine and aldehydes, via a retro-aldol mechanism. This Thermoplasma volcanium (strain ATCC 51530 / DSM 4299 / JCM 9571 / NBRC 15438 / GSS1) protein is Serine hydroxymethyltransferase.